A 578-amino-acid polypeptide reads, in one-letter code: PX domain-containing protein kinase-like protein (578 aa).

The 113-residue stretch at 14-126 (LDDTVPLTAA…KFLDPNNYSA (113 aa)) folds into the PX domain. The Protein kinase domain occupies 88–481 (FIAERQKGLQ…LENSEEHSAK (394 aa)). 2 stretches are compositionally biased toward basic residues: residues 437–448 (IHQHRRLTRAQS) and 457–469 (KKRKILARKKSKR). Disordered regions lie at residues 437–548 (IHQH…NGMS) and 559–578 (FQKGTLRKAKTCDHSAPKIG). A compositionally biased stretch (low complexity) spans 483–513 (SNSNNSAGSGASSPLTSPSSPTPPSTSGISA). The segment covering 514–530 (LPPPPPPPPPPAAPLPP) has biased composition (pro residues). The WH2 domain maps to 548-567 (SRGALLSSIQNFQKGTLRKA). The span at 568–578 (KTCDHSAPKIG) shows a compositional bias: basic and acidic residues.

The protein belongs to the protein kinase superfamily. In terms of tissue distribution, widely expressed in all tissues examined except in heart. Isoform 1 is expressed in high levels in the brain, skeletal muscle, spleen and testis. Isoform 7 expression has yet to be demonstrated.

It localises to the cytoplasm. The protein localises to the cell membrane. In terms of biological role, binds to and modulates brain Na,K-ATPase subunits ATP1B1 and ATP1B3 and may thereby participate in the regulation of electrical excitability and synaptic transmission. May not display kinase activity. In Homo sapiens (Human), this protein is PX domain-containing protein kinase-like protein.